Here is a 101-residue protein sequence, read N- to C-terminus: uncharacterized protein (101 aa).

2 helical membrane-spanning segments follow: residues 10 to 30 (VLAILVCQFIGPNVFIIIGSI) and 67 to 87 (IILGFIGIYVFLFVLLFILSI).

It localises to the membrane. This is an uncharacterized protein from Acanthamoeba polyphaga (Amoeba).